The following is a 437-amino-acid chain: ATP-dependent protease ATPase subunit HslU (437 aa).

Residues Val18, 60-65 (GCGKTE), Asp250, Glu315, and Arg387 each bind ATP.

Belongs to the ClpX chaperone family. HslU subfamily. As to quaternary structure, a double ring-shaped homohexamer of HslV is capped on each side by a ring-shaped HslU homohexamer. The assembly of the HslU/HslV complex is dependent on binding of ATP.

The protein resides in the cytoplasm. Its function is as follows. ATPase subunit of a proteasome-like degradation complex; this subunit has chaperone activity. The binding of ATP and its subsequent hydrolysis by HslU are essential for unfolding of protein substrates subsequently hydrolyzed by HslV. HslU recognizes the N-terminal part of its protein substrates and unfolds these before they are guided to HslV for hydrolysis. This is ATP-dependent protease ATPase subunit HslU from Methylobacterium radiotolerans (strain ATCC 27329 / DSM 1819 / JCM 2831 / NBRC 15690 / NCIMB 10815 / 0-1).